The following is a 147-amino-acid chain: uncharacterized protein (147 aa).

The region spanning 1–137 is the HTH marR-type domain; it reads MRDNTIGSLI…LYELMTKVHK (137 aa). The H-T-H motif DNA-binding region spans 53–76; sequence QMELAEKVTVTQGGISRMLTRLEK.

This is an uncharacterized protein from Bacillus cereus (strain ATCC 14579 / DSM 31 / CCUG 7414 / JCM 2152 / NBRC 15305 / NCIMB 9373 / NCTC 2599 / NRRL B-3711).